The sequence spans 515 residues: Cytoplasmic dynein 1 light intermediate chain 1 (515 aa).

Over residues 1–24 (MAAVGRAGSFGSSSASGAANNASA) the composition is skewed to low complexity. Residues 1–34 (MAAVGRAGSFGSSSASGAANNASAELRAGGEEDD) are disordered. 64 to 71 (GEDGAGKT) contributes to the ATP binding site. Disordered regions lie at residues 370–424 (QSQL…DPNM) and 445–515 (KTGS…GEAS). Positions 397 to 409 (RTPNRSVTSNVAS) are enriched in polar residues. Positions 448 to 468 (SPGGPGGVGGSPGGGSAGGTG) are enriched in gly residues. The span at 490 to 499 (ELDRISRKPE) shows a compositional bias: basic and acidic residues. Residues 502-515 (SPTSPTSPTEGEAS) show a composition bias toward polar residues.

The protein belongs to the dynein light intermediate chain family. In terms of assembly, homodimer. The cytoplasmic dynein 1 complex consists of two catalytic heavy chains (HCs) and a number of non-catalytic subunits presented by intermediate chains (ICs). Phosphorylated.

It localises to the cytoplasm. Its subcellular location is the cytoskeleton. The protein resides in the chromosome. The protein localises to the centromere. It is found in the kinetochore. It localises to the spindle pole. Its subcellular location is the recycling endosome membrane. Its function is as follows. Acts as one of several non-catalytic accessory components of the cytoplasmic dynein 1 complex that are thought to be involved in linking dynein to cargos and to adapter proteins that regulate dynein function. Cytoplasmic dynein 1 acts as a motor for the intracellular retrograde motility of vesicles and organelles along microtubules. May play a role in binding dynein to membranous organelles or chromosomes. May regulate the movement of peripheral sorting endosomes along microtubule tracks toward the microtubule organizing center/centrosome, generating the endosomal recycling compartment. The chain is Cytoplasmic dynein 1 light intermediate chain 1 (DYNC1LI1) from Gallus gallus (Chicken).